The primary structure comprises 293 residues: AA9 family lytic polysaccharide monooxygenase E (293 aa).

The N-terminal stretch at 1–19 (MKGLLSVAALSLAVSEVSA) is a signal peptide. Residues His20 and His90 each coordinate Cu(2+). Cys59 and Cys172 are oxidised to a cystine. Positions 158 and 167 each coordinate O2. Residue Tyr169 coordinates Cu(2+). The CBM1 domain maps to 257–293 (CAVAKWGQCGGNGWTGCTTCAAGSTCNTQNAYYHQCV).

This sequence belongs to the polysaccharide monooxygenase AA9 family. Requires Cu(2+) as cofactor.

It is found in the secreted. The catalysed reaction is [(1-&gt;4)-beta-D-glucosyl]n+m + reduced acceptor + O2 = 4-dehydro-beta-D-glucosyl-[(1-&gt;4)-beta-D-glucosyl]n-1 + [(1-&gt;4)-beta-D-glucosyl]m + acceptor + H2O.. Glucose dehydrogenase and aryl-alcohol quinone oxidoreductases regulate the oxidative degradation of cellulose since they can act as catalytically efficient electron donors for LPMO9E. Functionally, lytic polysaccharide monooxygenase (LPMO) that depolymerizes crystalline and amorphous polysaccharides via the oxidation of scissile alpha- or beta-(1-4)-glycosidic bonds, yielding only C1 oxidation products. Catalysis by LPMOs requires the reduction of the active-site copper from Cu(II) to Cu(I) by a reducing agent and H(2)O(2) or O(2) as a cosubstrate. Improves the progression of lytic enzymes in delignified miscanthus cell walls. This boosting effect dependents on the cellular type which indicates contrasted recalcitrance levels in plant tissues. This Podospora anserina (strain S / ATCC MYA-4624 / DSM 980 / FGSC 10383) (Pleurage anserina) protein is AA9 family lytic polysaccharide monooxygenase E.